The sequence spans 455 residues: 3-isopropylmalate dehydratase large subunit (455 aa).

[4Fe-4S] cluster is bound by residues Cys-337, Cys-397, and Cys-400.

It belongs to the aconitase/IPM isomerase family. LeuC type 1 subfamily. Heterodimer of LeuC and LeuD. The cofactor is [4Fe-4S] cluster.

The catalysed reaction is (2R,3S)-3-isopropylmalate = (2S)-2-isopropylmalate. The protein operates within amino-acid biosynthesis; L-leucine biosynthesis; L-leucine from 3-methyl-2-oxobutanoate: step 2/4. Catalyzes the isomerization between 2-isopropylmalate and 3-isopropylmalate, via the formation of 2-isopropylmaleate. In Leuconostoc citreum (strain KM20), this protein is 3-isopropylmalate dehydratase large subunit.